We begin with the raw amino-acid sequence, 262 residues long: Ribosomal RNA small subunit methyltransferase A (262 aa).

The S-adenosyl-L-methionine site is built by His-13, Leu-15, Gly-40, Glu-61, Asp-85, and Asn-103.

This sequence belongs to the class I-like SAM-binding methyltransferase superfamily. rRNA adenine N(6)-methyltransferase family. RsmA subfamily.

The protein resides in the cytoplasm. It catalyses the reaction adenosine(1518)/adenosine(1519) in 16S rRNA + 4 S-adenosyl-L-methionine = N(6)-dimethyladenosine(1518)/N(6)-dimethyladenosine(1519) in 16S rRNA + 4 S-adenosyl-L-homocysteine + 4 H(+). In terms of biological role, specifically dimethylates two adjacent adenosines (A1518 and A1519) in the loop of a conserved hairpin near the 3'-end of 16S rRNA in the 30S particle. May play a critical role in biogenesis of 30S subunits. In Bordetella avium (strain 197N), this protein is Ribosomal RNA small subunit methyltransferase A.